Reading from the N-terminus, the 705-residue chain is Polyribonucleotide nucleotidyltransferase (705 aa).

Positions 487 and 493 each coordinate Mg(2+). In terms of domain architecture, KH spans 554–613 (PKILTMTINPDKIRDVIGPSGKQINKIIEETGVKIDIEQDGTIFISSTDESGNQKAKKII). The region spanning 623 to 691 (GQLYLGKVKR…KQGRVNLSRK (69 aa)) is the S1 motif domain.

It belongs to the polyribonucleotide nucleotidyltransferase family. As to quaternary structure, homodimer. Component of a possible RNA degradosome complex composed of rny, rnjA, rnjB, pnp, pfkA and eno (although rnjA and rnjB's presence is unclear). RNA helicase CshA may also be a member of this complex. Mg(2+) is required as a cofactor.

Its subcellular location is the cytoplasm. The catalysed reaction is RNA(n+1) + phosphate = RNA(n) + a ribonucleoside 5'-diphosphate. Functionally, involved in mRNA degradation. Catalyzes the phosphorolysis of single-stranded polyribonucleotides processively in the 3'- to 5'-direction. Necessary for competence development in Bacillus subtilis. May be necessary for modification of the srfA transcript (stabilization or translation activation). Involved in processing precursor type I toxin-antitoxin RNAs antitoxin SR4 and SR5 RNAs to their mature forms. The chain is Polyribonucleotide nucleotidyltransferase from Bacillus subtilis (strain 168).